The sequence spans 256 residues: Major prion protein (256 aa).

A signal peptide spans 1–24 (MVKSHIGSWILVLFVAMWSDVGLC). The interval 25 to 233 (KKRPKPGGGW…ESQAYYQRGA (209 aa)) is interaction with GRB2, ERI3 and SYN1. The segment at 28–110 (PKPGGGWNTG…QWNKPSKPKT (83 aa)) is disordered. 5 tandem repeats follow at residues 54 to 62 (PQGGGGWGQ), 63 to 70 (PHGGGWGQ), 71 to 78 (PHGGGWGQ), 79 to 86 (PHGGGWGQ), and 87 to 95 (PHGGGGWGQ). Residues 54–95 (PQGGGGWGQPHGGGWGQPHGGGWGQPHGGGWGQPHGGGGWGQ) are 5 X 8 AA tandem repeats of P-H-G-G-G-W-G-Q. The span at 55–97 (QGGGGWGQPHGGGWGQPHGGGWGQPHGGGWGQPHGGGGWGQGG) shows a compositional bias: gly residues. 12 residues coordinate Cu(2+): H64, G65, G66, H72, G73, G74, H80, G81, G82, H88, G90, and G91. A disulfide bridge links C182 with C217. N-linked (GlcNAc...) asparagine glycosylation is found at N184 and N200. A lipid anchor (GPI-anchor amidated alanine) is attached at A233. The propeptide at 234–256 (SVILFSSPPVILLISFLIFLIVG) is removed in mature form.

The protein belongs to the prion family. As to quaternary structure, monomer and homodimer. Has a tendency to aggregate into amyloid fibrils containing a cross-beta spine, formed by a steric zipper of superposed beta-strands. Soluble oligomers may represent an intermediate stage on the path to fibril formation. Copper binding may promote oligomerization. Interacts with GRB2, APP, ERI3/PRNPIP and SYN1. Mislocalized cytosolically exposed PrP interacts with MGRN1; this interaction alters MGRN1 subcellular location and causes lysosomal enlargement. Interacts with KIAA1191.

The protein localises to the cell membrane. The protein resides in the golgi apparatus. Its function is as follows. Its primary physiological function is unclear. Has cytoprotective activity against internal or environmental stresses. May play a role in neuronal development and synaptic plasticity. May be required for neuronal myelin sheath maintenance. May play a role in iron uptake and iron homeostasis. Soluble oligomers are toxic to cultured neuroblastoma cells and induce apoptosis (in vitro). Association with GPC1 (via its heparan sulfate chains) targets PRNP to lipid rafts. Also provides Cu(2+) or Zn(2+) for the ascorbate-mediated GPC1 deaminase degradation of its heparan sulfate side chains. This is Major prion protein (PRNP) from Budorcas taxicolor (Golden takin).